The chain runs to 538 residues: Chaperonin GroEL (538 aa).

Residues 29 to 32 (TIGP), 86 to 90 (DGTTT), Gly-413, 476 to 478 (NAA), and Asp-492 contribute to the ATP site.

This sequence belongs to the chaperonin (HSP60) family. As to quaternary structure, forms a cylinder of 14 subunits composed of two heptameric rings stacked back-to-back. Interacts with the co-chaperonin GroES.

The protein resides in the cytoplasm. The catalysed reaction is ATP + H2O + a folded polypeptide = ADP + phosphate + an unfolded polypeptide.. Together with its co-chaperonin GroES, plays an essential role in assisting protein folding. The GroEL-GroES system forms a nano-cage that allows encapsulation of the non-native substrate proteins and provides a physical environment optimized to promote and accelerate protein folding. This Staphylococcus aureus (strain MRSA252) protein is Chaperonin GroEL.